Consider the following 462-residue polypeptide: General transcription factor IIH subunit 4 (462 aa).

The protein belongs to the TFB2 family. In terms of assembly, component of the 7-subunit TFIIH core complex composed of XPB/ERCC3, XPD/ERCC2, GTF2H1, GTF2H2, GTF2H3, GTF2H4 and GTF2H5, which is active in NER. The core complex associates with the 3-subunit CDK-activating kinase (CAK) module composed of CCNH/cyclin H, CDK7 and MNAT1 to form the 10-subunit holoenzyme (holo-TFIIH) active in transcription. Part of TBP-based Pol II pre-initiation complex (PIC), in which Pol II core assembles with general transcription factors and other specific initiation factors including GTF2E1, GTF2E2, GTF2F1, GTF2F2, TCEA1, ERCC2, ERCC3, GTF2H2, GTF2H3, GTF2H4, GTF2H5, GTF2A1, GTF2A2, GTF2B and TBP; this large multi-subunit PIC complex mediates DNA unwinding and targets Pol II core to the transcription start site where the first phosphodiester bond forms.

Its subcellular location is the nucleus. Its function is as follows. Component of the general transcription and DNA repair factor IIH (TFIIH) core complex, which is involved in general and transcription-coupled nucleotide excision repair (NER) of damaged DNA and, when complexed to CAK, in RNA transcription by RNA polymerase II. In NER, TFIIH acts by opening DNA around the lesion to allow the excision of the damaged oligonucleotide and its replacement by a new DNA fragment. In transcription, TFIIH has an essential role in transcription initiation. When the pre-initiation complex (PIC) has been established, TFIIH is required for promoter opening and promoter escape. Phosphorylation of the C-terminal tail (CTD) of the largest subunit of RNA polymerase II by the kinase module CAK controls the initiation of transcription. In terms of biological role, stimulates the ATPase activity of TFIIH subunit XPB/ERCC3. The chain is General transcription factor IIH subunit 4 (GTF2H4) from Homo sapiens (Human).